Here is a 1307-residue protein sequence, read N- to C-terminus: Light-sensor Protein kinase (1307 aa).

The region spanning 215–394 (DIELLCDTIV…VFGMQLNLHV (180 aa)) is the GAF domain. A phytochromobilin-binding site is contributed by cysteine 320. One can recognise a PAS domain in the interval 609–680 (LANEMSRVLE…RLLSLALQGE (72 aa)). In terms of domain architecture, PAC spans 683–739 (QNVEIKLKTFGTQTTERAVILIVNACCSRDASDFVVGVFFVGQDVTEQRMFMDRFTR). The tract at residues 779–1003 (DHATGSVERL…WSFSEKFFQW (225 aa)) is hinge. Positions 1004-1307 (IQITGSLGSG…DSYPSTEEPS (304 aa)) constitute a Protein kinase domain. Residues 1010-1018 (LGSGSSATV) and lysine 1031 each bind ATP. Residue aspartate 1127 is part of the active site.

The protein in the N-terminal section; belongs to the phytochrome family. It in the C-terminal section; belongs to the protein kinase superfamily. Ser/Thr protein kinase family. As to quaternary structure, homodimer. Contains one covalently linked phytochromobilin chromophore.

Its subcellular location is the cell membrane. It carries out the reaction L-seryl-[protein] + ATP = O-phospho-L-seryl-[protein] + ADP + H(+). The enzyme catalyses L-threonyl-[protein] + ATP = O-phospho-L-threonyl-[protein] + ADP + H(+). Its function is as follows. Regulatory photoreceptor which exists in two forms that are reversibly interconvertible by light: the Pr form that absorbs maximally in the red region of the spectrum and the Pfr form that absorbs maximally in the far-red region. Photoconversion of Pr to Pfr induces an array of morphogenic responses, whereas reconversion of Pfr to Pr cancels the induction of those responses. Pfr controls the expression of a number of nuclear genes including those encoding the small subunit of ribulose-bisphosphate carboxylase, chlorophyll A/B binding protein, protochlorophyllide reductase, rRNA, etc. It also controls the expression of its own gene(s) in a negative feedback fashion. This is Light-sensor Protein kinase (PHY1) from Ceratodon purpureus (Fire moss).